The chain runs to 642 residues: DNA gyrase subunit B (642 aa).

Positions 422-536 (CELFIVEGDS…AGYVYIAQPP (115 aa)) constitute a Toprim domain. Residues Glu428, Asp501, and Asp503 each contribute to the Mg(2+) site.

Belongs to the type II topoisomerase family. In terms of assembly, heterotetramer, composed of two GyrA and two GyrB chains. Within the heterotetramer, GyrA contains the active site tyrosine that forms a covalent intermediate with the DNA, while GyrB contributes the cofactor binding sites and catalyzes ATP hydrolysis. It depends on Mg(2+) as a cofactor. Requires Mn(2+) as cofactor. Ca(2+) serves as cofactor.

Its subcellular location is the cytoplasm. It carries out the reaction ATP-dependent breakage, passage and rejoining of double-stranded DNA.. With respect to regulation, pyrrolopyrimidines inhibit both GyrB and its paralog in topoisomerase IV (parE). Functionally, DNA gyrase negatively supercoils closed circular double-stranded DNA in an ATP-dependent manner and also catalyzes the interconversion of other topological isomers of double-stranded DNA rings, including catenanes and knotted rings. The protein is DNA gyrase subunit B of Enterococcus faecalis (strain ATCC 700802 / V583).